The primary structure comprises 295 residues: Homeobox protein XHOX-7.1 (295 aa).

Disordered regions lie at residues 75–115 (RKPG…PISL) and 134–175 (KPES…KPRT). The segment covering 84–97 (SSPTGSPLAGTSHS) has biased composition (polar residues). Residues 141 to 153 (SSWIQSPSFSPSP) are compositionally biased toward low complexity. Basic residues predominate over residues 164 to 174 (LRKHKTNRKPR). Positions 170–229 (NRKPRTPFTTSQLLALERKFRQKQYLSIAERAEFSSSLNLTETQVKIWFQNRRAKAKRLQ) form a DNA-binding region, homeobox.

It belongs to the Msh homeobox family.

It is found in the nucleus. This is Homeobox protein XHOX-7.1 from Xenopus laevis (African clawed frog).